Consider the following 214-residue polypeptide: MRAELAVYFIAGTQDIVRGTLPGVLEEALKAGITCFQYREKGAGSLQTASERKEMALECQQLCTKYQVPFIINDDVALALEIGADGIHVGQNDEEIRQVIASCAGKMKIGLSVHSVSEAEEAERLGAVDYIGVGPIFPTISKADAESVSGTAILEEIRRAGIKLPIVGIGGINETNSAEVLTAGADGVSVISAITRSDDCYSVIKQLKNPGYPS.

4-amino-2-methyl-5-(diphosphooxymethyl)pyrimidine contacts are provided by residues Gln37–Lys41 and Asn73. Asp74 and Asp93 together coordinate Mg(2+). Ser112 lines the 4-amino-2-methyl-5-(diphosphooxymethyl)pyrimidine pocket. Thr139 to Ser141 serves as a coordination point for 2-[(2R,5Z)-2-carboxy-4-methylthiazol-5(2H)-ylidene]ethyl phosphate. Lys142 provides a ligand contact to 4-amino-2-methyl-5-(diphosphooxymethyl)pyrimidine. Residues Gly171 and Ile191–Ser192 contribute to the 2-[(2R,5Z)-2-carboxy-4-methylthiazol-5(2H)-ylidene]ethyl phosphate site.

Belongs to the thiamine-phosphate synthase family. Requires Mg(2+) as cofactor.

It catalyses the reaction 2-[(2R,5Z)-2-carboxy-4-methylthiazol-5(2H)-ylidene]ethyl phosphate + 4-amino-2-methyl-5-(diphosphooxymethyl)pyrimidine + 2 H(+) = thiamine phosphate + CO2 + diphosphate. The enzyme catalyses 2-(2-carboxy-4-methylthiazol-5-yl)ethyl phosphate + 4-amino-2-methyl-5-(diphosphooxymethyl)pyrimidine + 2 H(+) = thiamine phosphate + CO2 + diphosphate. The catalysed reaction is 4-methyl-5-(2-phosphooxyethyl)-thiazole + 4-amino-2-methyl-5-(diphosphooxymethyl)pyrimidine + H(+) = thiamine phosphate + diphosphate. The protein operates within cofactor biosynthesis; thiamine diphosphate biosynthesis; thiamine phosphate from 4-amino-2-methyl-5-diphosphomethylpyrimidine and 4-methyl-5-(2-phosphoethyl)-thiazole: step 1/1. Functionally, condenses 4-methyl-5-(beta-hydroxyethyl)thiazole monophosphate (THZ-P) and 2-methyl-4-amino-5-hydroxymethyl pyrimidine pyrophosphate (HMP-PP) to form thiamine monophosphate (TMP). The sequence is that of Thiamine-phosphate synthase from Listeria monocytogenes serotype 4b (strain F2365).